Reading from the N-terminus, the 132-residue chain is Ribosome-binding factor A (132 aa).

The protein belongs to the RbfA family. Monomer. Binds 30S ribosomal subunits, but not 50S ribosomal subunits or 70S ribosomes.

It localises to the cytoplasm. Its function is as follows. One of several proteins that assist in the late maturation steps of the functional core of the 30S ribosomal subunit. Associates with free 30S ribosomal subunits (but not with 30S subunits that are part of 70S ribosomes or polysomes). Required for efficient processing of 16S rRNA. May interact with the 5'-terminal helix region of 16S rRNA. The chain is Ribosome-binding factor A from Teredinibacter turnerae (strain ATCC 39867 / T7901).